A 184-amino-acid polypeptide reads, in one-letter code: ATP synthase subunit b, chloroplastic (184 aa).

The helical transmembrane segment at Ile-4–Thr-24 threads the bilayer.

It belongs to the ATPase B chain family. As to quaternary structure, F-type ATPases have 2 components, F(1) - the catalytic core - and F(0) - the membrane proton channel. F(1) has five subunits: alpha(3), beta(3), gamma(1), delta(1), epsilon(1). F(0) has four main subunits: a(1), b(1), b'(1) and c(10-14). The alpha and beta chains form an alternating ring which encloses part of the gamma chain. F(1) is attached to F(0) by a central stalk formed by the gamma and epsilon chains, while a peripheral stalk is formed by the delta, b and b' chains.

The protein localises to the plastid. Its subcellular location is the chloroplast thylakoid membrane. In terms of biological role, f(1)F(0) ATP synthase produces ATP from ADP in the presence of a proton or sodium gradient. F-type ATPases consist of two structural domains, F(1) containing the extramembraneous catalytic core and F(0) containing the membrane proton channel, linked together by a central stalk and a peripheral stalk. During catalysis, ATP synthesis in the catalytic domain of F(1) is coupled via a rotary mechanism of the central stalk subunits to proton translocation. Functionally, component of the F(0) channel, it forms part of the peripheral stalk, linking F(1) to F(0). This chain is ATP synthase subunit b, chloroplastic, found in Physcomitrium patens (Spreading-leaved earth moss).